The sequence spans 85 residues: uncharacterized protein (85 aa).

2 helical membrane-spanning segments follow: residues 20–42 (IYWFFCLYYKDGPILYTIYTTFL) and 52–69 (IILRNTVAFLSFMYKHYY).

It is found in the membrane. This is an uncharacterized protein from Saccharomyces cerevisiae (strain ATCC 204508 / S288c) (Baker's yeast).